The chain runs to 347 residues: Ion-translocating oxidoreductase complex subunit D (347 aa).

Helical transmembrane passes span 15 to 35 (IMFLVIVACLPGIFAKYYFFG), 36 to 56 (IGTLIQIFFSIFISLVLEIII), 84 to 104 (IPPLLPWWMTSIGLFFAIVVA), and 114 to 134 (NIFNPAMVGYAVLLISFPVYM). Threonine 182 is modified (FMN phosphoryl threonine). The next 5 membrane-spanning stretches (helical) occupy residues 217-237 (CINISFFLGGIFLLFTKIICW), 239-259 (IPISFLSSLGMLSIITYFYSK), 261-281 (LFMSPQVHFFSGGTMICAFFI), 289-309 (ACNNVGKIVFGIIIGFLVWII), and 315-335 (YPDAIAFSVLFANMTVPLVDY).

It belongs to the NqrB/RnfD family. In terms of assembly, the complex is composed of six subunits: RnfA, RnfB, RnfC, RnfD, RnfE and RnfG. Requires FMN as cofactor.

The protein resides in the cell inner membrane. In terms of biological role, part of a membrane-bound complex that couples electron transfer with translocation of ions across the membrane. In Buchnera aphidicola subsp. Acyrthosiphon pisum (strain 5A), this protein is Ion-translocating oxidoreductase complex subunit D.